A 272-amino-acid polypeptide reads, in one-letter code: Activator of basal transcription 1 (272 aa).

Met-1 is modified (N-acetylmethionine). Residues 1-17 (MEAEESEKAATEQEPLK) show a composition bias toward basic and acidic residues. Residues 1–38 (MEAEESEKAATEQEPLKGTEQTLDAEEEQEESEDAACG) form a disordered region. Positions 23-34 (LDAEEEQEESED) are enriched in acidic residues. One can recognise an RRM domain in the interval 46–142 (GIVYLGHIPP…RRRSPFRYDL (97 aa)). The stretch at 161–191 (AFERQVRRQRLRAEVAQAKRETDFYLQSVER) forms a coiled coil. A disordered region spans residues 197–272 (AADGDPARPD…MEGPSLVRDS (76 aa)).

The protein belongs to the ESF2/ABP1 family. Interacts with ESF1/ABTAP. Interacts with IGHMBP2.

The protein localises to the nucleus. The protein resides in the nucleolus. Functionally, could be a novel TATA-binding protein (TBP) which can function as a basal transcription activator. Can act as a regulator of basal transcription for class II genes. The sequence is that of Activator of basal transcription 1 (ABT1) from Pongo abelii (Sumatran orangutan).